Reading from the N-terminus, the 280-residue chain is Tryptophan synthase alpha chain (280 aa).

Active-site proton acceptor residues include E49 and D60.

It belongs to the TrpA family. Tetramer of two alpha and two beta chains.

The catalysed reaction is (1S,2R)-1-C-(indol-3-yl)glycerol 3-phosphate + L-serine = D-glyceraldehyde 3-phosphate + L-tryptophan + H2O. Its pathway is amino-acid biosynthesis; L-tryptophan biosynthesis; L-tryptophan from chorismate: step 5/5. Its function is as follows. The alpha subunit is responsible for the aldol cleavage of indoleglycerol phosphate to indole and glyceraldehyde 3-phosphate. This chain is Tryptophan synthase alpha chain, found in Corynebacterium glutamicum (strain ATCC 13032 / DSM 20300 / JCM 1318 / BCRC 11384 / CCUG 27702 / LMG 3730 / NBRC 12168 / NCIMB 10025 / NRRL B-2784 / 534).